A 116-amino-acid polypeptide reads, in one-letter code: PTS system N,N'-diacetylchitobiose-specific EIIA component (116 aa).

One can recognise a PTS EIIA type-3 domain in the interval 15–113 (EELEEVVMGL…ITELIELHEK (99 aa)). Catalysis depends on histidine 89, which acts as the Tele-phosphohistidine intermediate. Histidine 89 bears the Phosphohistidine; by HPr mark.

In terms of assembly, forms a complex with ChbB (EIIB). ChbA is a homotrimer. Mg(2+) serves as cofactor.

It is found in the cytoplasm. Functionally, the phosphoenolpyruvate-dependent sugar phosphotransferase system (sugar PTS), a major carbohydrate active transport system, catalyzes the phosphorylation of incoming sugar substrates concomitantly with their translocation across the cell membrane. The enzyme II ChbABC PTS system is involved in the transport of the chitin disaccharide N,N'-diacetylchitobiose (GlcNAc2). The chain is PTS system N,N'-diacetylchitobiose-specific EIIA component (chbA) from Escherichia coli O157:H7.